The chain runs to 72 residues: Protein RALF-like 36 (72 aa).

The first 27 residues, 1–27 (MGISKKTVVQSFALIIIISIVMSTTEA), serve as a signal peptide directing secretion. 2 disulfides stabilise this stretch: Cys-43/Cys-51 and Cys-63/Cys-69.

The protein belongs to the plant rapid alkalinization factor (RALF) family.

It is found in the secreted. Cell signaling peptide that may regulate plant stress, growth, and development. Mediates a rapid alkalinization of extracellular space by mediating a transient increase in the cytoplasmic Ca(2+) concentration leading to a calcium-dependent signaling events through a cell surface receptor and a concomitant activation of some intracellular mitogen-activated protein kinases. This chain is Protein RALF-like 36, found in Arabidopsis thaliana (Mouse-ear cress).